Consider the following 507-residue polypeptide: ATP synthase subunit alpha, mitochondrial (507 aa).

171 to 178 (GDRQTGKT) is a binding site for ATP.

The protein belongs to the ATPase alpha/beta chains family. F-type ATPases have 2 components, CF(1) - the catalytic core - and CF(0) - the membrane proton channel. CF(1) has five subunits: alpha(3), beta(3), gamma(1), delta(1), epsilon(1). CF(0) has three main subunits: a, b and c.

The protein localises to the mitochondrion. It localises to the mitochondrion inner membrane. Its function is as follows. Mitochondrial membrane ATP synthase (F(1)F(0) ATP synthase or Complex V) produces ATP from ADP in the presence of a proton gradient across the membrane which is generated by electron transport complexes of the respiratory chain. F-type ATPases consist of two structural domains, F(1) - containing the extramembraneous catalytic core, and F(0) - containing the membrane proton channel, linked together by a central stalk and a peripheral stalk. During catalysis, ATP synthesis in the catalytic domain of F(1) is coupled via a rotary mechanism of the central stalk subunits to proton translocation. Subunits alpha and beta form the catalytic core in F(1). Rotation of the central stalk against the surrounding alpha(3)beta(3) subunits leads to hydrolysis of ATP in three separate catalytic sites on the beta subunits. Subunit alpha does not bear the catalytic high-affinity ATP-binding sites. This is ATP synthase subunit alpha, mitochondrial (ATPA) from Brassica napus (Rape).